We begin with the raw amino-acid sequence, 98 residues long: Large ribosomal subunit protein uL23 (98 aa).

Belongs to the universal ribosomal protein uL23 family. As to quaternary structure, part of the 50S ribosomal subunit. Contacts protein L29, and trigger factor when it is bound to the ribosome.

Functionally, one of the early assembly proteins it binds 23S rRNA. One of the proteins that surrounds the polypeptide exit tunnel on the outside of the ribosome. Forms the main docking site for trigger factor binding to the ribosome. The chain is Large ribosomal subunit protein uL23 from Rickettsia bellii (strain OSU 85-389).